Here is a 271-residue protein sequence, read N- to C-terminus: Undecaprenyl-diphosphatase (271 aa).

Transmembrane regions (helical) follow at residues 2–22 (LLILKAIILAIVEGLTEFVPV), 42–62 (ANLFNVVIQLGAILAVVVVYW), 80–100 (LRFWINIVVACIPAVIFGFSL), 108–128 (LFNPITVAIGLVIGGILMIIV), 149–168 (SIFVGMFQCLALWPGMSRSA), 175–195 (WIAGLSPVVAAEFSFFLAIPV), 214–234 (IEFIALIVGFVGAFLVSLVVI), and 248–268 (IFAIYRIFIGAILLILAIFKI).

It belongs to the UppP family.

The protein resides in the cell membrane. It catalyses the reaction di-trans,octa-cis-undecaprenyl diphosphate + H2O = di-trans,octa-cis-undecaprenyl phosphate + phosphate + H(+). In terms of biological role, catalyzes the dephosphorylation of undecaprenyl diphosphate (UPP). Confers resistance to bacitracin. This chain is Undecaprenyl-diphosphatase, found in Clostridium tetani (strain Massachusetts / E88).